Consider the following 370-residue polypeptide: tRNA pseudouridine synthase D (370 aa).

Asp77 serves as the catalytic Nucleophile. The region spanning Gly152–Leu297 is the TRUD domain.

This sequence belongs to the pseudouridine synthase TruD family.

It carries out the reaction uridine(13) in tRNA = pseudouridine(13) in tRNA. Functionally, responsible for synthesis of pseudouridine from uracil-13 in transfer RNAs. The polypeptide is tRNA pseudouridine synthase D (Shewanella oneidensis (strain ATCC 700550 / JCM 31522 / CIP 106686 / LMG 19005 / NCIMB 14063 / MR-1)).